The primary structure comprises 406 residues: MQVYLVGGAVRDHLLGIDIYDRDWVVVGATPEIMLSQGYTAVGKDFPVFLHPKTKEEHALARTERKSGAGYTGFECFFDQSVTLEEDLIRRDLTINAMAMDEDGNLYDPYGGQKDIDAKVLRHVSQAFVEDPLRVLRVARFAAKLAHLGFSVAEETMQLMRDMAESGELSTLTPERVWQEWHKSLSTSRPDVFLSVLRDCGALAVVLPEIDALFGVPQPEKWHPEIDTGIHTLMVAQQAAKLSDSLPVRFAAQVHDLGKGVTPESEWPSHKMHCHTGLKLIKKLCDRVRVPNEFRDLALMVCEQHSNIHRAAELKPQTIIKILNKFDVWRKAERLQDILICCQADHAGRKGLEDQPYPQAELFMRAYQAAASVDVQAIIKDGFKGPAIRDEQEKRRAEAVKVALGK.

Positions 8 and 11 each coordinate ATP. Residues glycine 8 and arginine 11 each coordinate CTP. Mg(2+)-binding residues include aspartate 21 and aspartate 23. Residues arginine 91, arginine 137, and arginine 140 each contribute to the ATP site. CTP is bound by residues arginine 91, arginine 137, and arginine 140. Residues 228 to 329 form the HD domain; it reads TGIHTLMVAQ…IKILNKFDVW (102 aa).

The protein belongs to the tRNA nucleotidyltransferase/poly(A) polymerase family. Bacterial CCA-adding enzyme type 1 subfamily. In terms of assembly, monomer. Can also form homodimers and oligomers. It depends on Mg(2+) as a cofactor. The cofactor is Ni(2+).

The enzyme catalyses a tRNA precursor + 2 CTP + ATP = a tRNA with a 3' CCA end + 3 diphosphate. It catalyses the reaction a tRNA with a 3' CCA end + 2 CTP + ATP = a tRNA with a 3' CCACCA end + 3 diphosphate. Functionally, catalyzes the addition and repair of the essential 3'-terminal CCA sequence in tRNAs without using a nucleic acid template. Adds these three nucleotides in the order of C, C, and A to the tRNA nucleotide-73, using CTP and ATP as substrates and producing inorganic pyrophosphate. tRNA 3'-terminal CCA addition is required both for tRNA processing and repair. Also involved in tRNA surveillance by mediating tandem CCA addition to generate a CCACCA at the 3' terminus of unstable tRNAs. While stable tRNAs receive only 3'-terminal CCA, unstable tRNAs are marked with CCACCA and rapidly degraded. The polypeptide is Multifunctional CCA protein (Vibrio campbellii (strain ATCC BAA-1116)).